A 446-amino-acid polypeptide reads, in one-letter code: D(1A) dopamine receptor (446 aa).

Residues 1-22 (MAPNTSTMDEAGLPAERDFSFR) are Extracellular-facing. N-linked (GlcNAc...) asparagine glycosylation is present at Asn4. Residues 23-48 (ILTACFLSLLILSTLLGNTLVCAAVI) form a helical membrane-spanning segment. Residues 49–59 (RFRHLRSKVTN) lie on the Cytoplasmic side of the membrane. The chain crosses the membrane as a helical span at residues 60 to 86 (FFVISLAVSDLLVAVLVMPWKAVAEIA). The Extracellular portion of the chain corresponds to 87–95 (GFWPLGPFC). Cys95 and Cys186 are oxidised to a cystine. Residues 96–118 (NIWVAFDIMCSTASILNLCVISV) form a helical membrane-spanning segment. The Cytoplasmic portion of the chain corresponds to 119–137 (DRYWAISSPFQYERKMTPK). The chain crosses the membrane as a helical span at residues 138–162 (AAFILISVAWTLSVLISFIPVQLSW). Residues 163-192 (HKAKPTWPLDGNFTSLEDTEDDNCDTRLSR) lie on the Extracellular side of the membrane. The helical transmembrane segment at 193 to 218 (TYAISSSLISFYIPVAIMIVTYTSIY) threads the bilayer. The Cytoplasmic portion of the chain corresponds to 219 to 272 (RIAQKQIRRISALERAAVHAKNCQTTAGNGNPVECAQSESSFKMSFKRETKVLK). The chain crosses the membrane as a helical span at residues 273–299 (TLSVIMGVFVCCWLPFFISNCMVPFCG). Over 300–312 (SEETQPFCIDSIT) the chain is Extracellular. The chain crosses the membrane as a helical span at residues 313–337 (FDVFVWFGWANSSLNPIIYAFNADF). The Cytoplasmic portion of the chain corresponds to 338-446 (QKAFSTLLGC…PVTHSGQHST (109 aa)). S-palmitoyl cysteine attachment occurs at residues Cys347 and Cys351.

It belongs to the G-protein coupled receptor 1 family. In terms of assembly, interacts with DNAJC14 via its C-terminus PubMed:11331877. Interacts with DRD2. Interacts with DORIP1. N-glycosylated. As to expression, brain, in the striatum, the nucleus accumbens, and the olfactory tubercle.

Its subcellular location is the cell membrane. It localises to the endoplasmic reticulum membrane. The protein resides in the cell projection. It is found in the dendrite. The protein localises to the cilium membrane. Its subcellular location is the dendritic spine. Its function is as follows. Dopamine receptor whose activity is mediated by G proteins which activate adenylyl cyclase. The polypeptide is D(1A) dopamine receptor (Drd1) (Rattus norvegicus (Rat)).